We begin with the raw amino-acid sequence, 202 residues long: Imidazoleglycerol-phosphate dehydratase (202 aa).

It belongs to the imidazoleglycerol-phosphate dehydratase family.

It localises to the cytoplasm. The catalysed reaction is D-erythro-1-(imidazol-4-yl)glycerol 3-phosphate = 3-(imidazol-4-yl)-2-oxopropyl phosphate + H2O. The protein operates within amino-acid biosynthesis; L-histidine biosynthesis; L-histidine from 5-phospho-alpha-D-ribose 1-diphosphate: step 6/9. The polypeptide is Imidazoleglycerol-phosphate dehydratase (Rhizobium meliloti (strain 1021) (Ensifer meliloti)).